Consider the following 263-residue polypeptide: 3-methyl-2-oxobutanoate hydroxymethyltransferase 2 (263 aa).

Mg(2+) contacts are provided by aspartate 45 and aspartate 84. 3-methyl-2-oxobutanoate-binding positions include 45–46 (DS), aspartate 84, and lysine 112. Glutamate 114 contacts Mg(2+). The active-site Proton acceptor is the glutamate 181.

Belongs to the PanB family. Homodecamer; pentamer of dimers. Mg(2+) is required as a cofactor.

It is found in the cytoplasm. It carries out the reaction 3-methyl-2-oxobutanoate + (6R)-5,10-methylene-5,6,7,8-tetrahydrofolate + H2O = 2-dehydropantoate + (6S)-5,6,7,8-tetrahydrofolate. Its pathway is cofactor biosynthesis; (R)-pantothenate biosynthesis; (R)-pantoate from 3-methyl-2-oxobutanoate: step 1/2. Catalyzes the reversible reaction in which hydroxymethyl group from 5,10-methylenetetrahydrofolate is transferred onto alpha-ketoisovalerate to form ketopantoate. The polypeptide is 3-methyl-2-oxobutanoate hydroxymethyltransferase 2 (Aliivibrio fischeri (strain ATCC 700601 / ES114) (Vibrio fischeri)).